Consider the following 108-residue polypeptide: Thiosulfate sulfurtransferase GlpE (108 aa).

Residues 17 to 105 enclose the Rhodanese domain; it reads QEKEAVLVDI…WQRQFPAEVA (89 aa). The active-site Cysteine persulfide intermediate is the Cys-65.

Belongs to the GlpE family.

Its subcellular location is the cytoplasm. It carries out the reaction thiosulfate + hydrogen cyanide = thiocyanate + sulfite + 2 H(+). It catalyses the reaction thiosulfate + [thioredoxin]-dithiol = [thioredoxin]-disulfide + hydrogen sulfide + sulfite + 2 H(+). Functionally, transferase that catalyzes the transfer of sulfur from thiosulfate to thiophilic acceptors such as cyanide or dithiols. May function in a CysM-independent thiosulfate assimilation pathway by catalyzing the conversion of thiosulfate to sulfite, which can then be used for L-cysteine biosynthesis. The protein is Thiosulfate sulfurtransferase GlpE of Escherichia coli O8 (strain IAI1).